A 163-amino-acid polypeptide reads, in one-letter code: NADH-quinone oxidoreductase subunit I (163 aa).

4Fe-4S ferredoxin-type domains follow at residues 54-84 (LRRY…IDSH) and 94-123 (TRYD…LTRL). Residues Cys64, Cys67, Cys70, Cys74, Cys103, Cys106, Cys109, and Cys113 each coordinate [4Fe-4S] cluster.

Belongs to the complex I 23 kDa subunit family. In terms of assembly, NDH-1 is composed of 14 different subunits. Subunits NuoA, H, J, K, L, M, N constitute the membrane sector of the complex. [4Fe-4S] cluster serves as cofactor.

The protein localises to the cell inner membrane. The catalysed reaction is a quinone + NADH + 5 H(+)(in) = a quinol + NAD(+) + 4 H(+)(out). NDH-1 shuttles electrons from NADH, via FMN and iron-sulfur (Fe-S) centers, to quinones in the respiratory chain. The immediate electron acceptor for the enzyme in this species is believed to be ubiquinone. Couples the redox reaction to proton translocation (for every two electrons transferred, four hydrogen ions are translocated across the cytoplasmic membrane), and thus conserves the redox energy in a proton gradient. The chain is NADH-quinone oxidoreductase subunit I from Halorhodospira halophila (strain DSM 244 / SL1) (Ectothiorhodospira halophila (strain DSM 244 / SL1)).